The chain runs to 729 residues: MLYKGDTLYLDWLEDGIAELVFDAPGSVNKLDTATVASLGEAIGVLEQQSDLKGLLLRSNKAAFIVGADITEFLSLFLVPEEQLSQWLHFANSVFNRLEDLPVPTIAAVNGYALGGGCECVLATDYRLATPDLRIGLPETKLGIMPGFGGSVRMPRMLGADSALEIIAAGKDVGADQALKIGLVDGVVKAEKLVEGAMAILRQAINGDLDWKAKRQPKLEPLKLSKIEAAMSFTIAKGMVAQTAGKHYPAPITAVKTIEAAARFGREEALNLENKSFVPLAHTNEARALVGIFLNDQYVKGKAKKLTKDVETPKQAAVLGAGIMGGGIAYQSAWKGVPVVMKDINDKSLTLGMTEAAKLLNKQLERGKIDGLKLAGVISTIHPTLDYAGFDRVDVVVEAVVENPKVKKAVLAETEQKVRPDTVLASNTSTIPISELANALERPENFCGMHFFNPVHRMPLVEIIRGEKSSDETIAKVVAWASKMGKTPIVVNDCPGFFVNRVLFPYFAGFSQLLRDGADFRKIDKVMEKQFGWPMGPAYLLDVVGIDTAHHAQAVMAAGFPQRMQKDYRDAIDALFNANRFGQKNGLGFWRYKEDSKGKPKKEEDVVVDDLLAKVSQPKRDFSEEEIIARMMIPMVNEVVRCLEEGIIATPAEADMALVYGLGFPPFHGGAFRWLDTLGSAKYLDMAQQYQHLGPLYEVPEGLRNKARHNEPYYPPVEPARPVGDLKTA.

The enoyl-CoA hydratase/isomerase stretch occupies residues 1-189; sequence MLYKGDTLYL…KIGLVDGVVK (189 aa). A substrate-binding site is contributed by D296. The tract at residues 311 to 729 is 3-hydroxyacyl-CoA dehydrogenase; the sequence is ETPKQAAVLG…ARPVGDLKTA (419 aa). Residues M324, D343, 400–402, K407, and S429 contribute to the NAD(+) site; that span reads VVE. H450 (for 3-hydroxyacyl-CoA dehydrogenase activity) is an active-site residue. Residue N453 participates in NAD(+) binding. Substrate is bound by residues N500 and Y660. Residues 708–729 are disordered; it reads RHNEPYYPPVEPARPVGDLKTA.

This sequence in the N-terminal section; belongs to the enoyl-CoA hydratase/isomerase family. It in the C-terminal section; belongs to the 3-hydroxyacyl-CoA dehydrogenase family. Heterotetramer of two alpha chains (FadB) and two beta chains (FadA).

It catalyses the reaction a (3S)-3-hydroxyacyl-CoA + NAD(+) = a 3-oxoacyl-CoA + NADH + H(+). It carries out the reaction a (3S)-3-hydroxyacyl-CoA = a (2E)-enoyl-CoA + H2O. The catalysed reaction is a 4-saturated-(3S)-3-hydroxyacyl-CoA = a (3E)-enoyl-CoA + H2O. The enzyme catalyses (3S)-3-hydroxybutanoyl-CoA = (3R)-3-hydroxybutanoyl-CoA. It catalyses the reaction a (3Z)-enoyl-CoA = a 4-saturated (2E)-enoyl-CoA. It carries out the reaction a (3E)-enoyl-CoA = a 4-saturated (2E)-enoyl-CoA. The protein operates within lipid metabolism; fatty acid beta-oxidation. Involved in the aerobic and anaerobic degradation of long-chain fatty acids via beta-oxidation cycle. Catalyzes the formation of 3-oxoacyl-CoA from enoyl-CoA via L-3-hydroxyacyl-CoA. It can also use D-3-hydroxyacyl-CoA and cis-3-enoyl-CoA as substrate. The sequence is that of Fatty acid oxidation complex subunit alpha from Escherichia coli O6:H1 (strain CFT073 / ATCC 700928 / UPEC).